A 163-amino-acid chain; its full sequence is Nucleotide-binding protein NTHI1194 (163 aa).

It belongs to the YajQ family.

Its function is as follows. Nucleotide-binding protein. This is Nucleotide-binding protein NTHI1194 from Haemophilus influenzae (strain 86-028NP).